Consider the following 506-residue polypeptide: Apolipoprotein N-acyltransferase (506 aa).

A run of 6 helical transmembrane segments spans residues 26–46 (FAPY…LILI), 66–86 (FASG…MPLA), 89–109 (LFLM…FTWS), 113–133 (FFAK…WLIA), 166–186 (GVEL…YAVI), and 192–212 (MLLI…WDWV). The CN hydrolase domain maps to 225 to 471 (IQGNVDQNLK…TAVLRAELTP (247 aa)). E264 serves as the catalytic Proton acceptor. K330 is an active-site residue. C382 (nucleophile) is an active-site residue. The chain crosses the membrane as a helical span at residues 479–499 (HQLGSWPLYIWVALSLALAWW).

The protein belongs to the CN hydrolase family. Apolipoprotein N-acyltransferase subfamily.

Its subcellular location is the cell inner membrane. The catalysed reaction is N-terminal S-1,2-diacyl-sn-glyceryl-L-cysteinyl-[lipoprotein] + a glycerophospholipid = N-acyl-S-1,2-diacyl-sn-glyceryl-L-cysteinyl-[lipoprotein] + a 2-acyl-sn-glycero-3-phospholipid + H(+). Its pathway is protein modification; lipoprotein biosynthesis (N-acyl transfer). In terms of biological role, catalyzes the phospholipid dependent N-acylation of the N-terminal cysteine of apolipoprotein, the last step in lipoprotein maturation. The sequence is that of Apolipoprotein N-acyltransferase from Vibrio vulnificus (strain CMCP6).